We begin with the raw amino-acid sequence, 166 residues long: Glycine-rich RNA-binding protein GRP1A (166 aa).

The 79-residue stretch at 8-86 folds into the RRM domain; sequence YRCFVGGLAW…RSITVNEAQS (79 aa). The disordered stretch occupies residues 68-166; that stretch reads GMNGQDLDGR…YGGSGGGGGW (99 aa). 2 stretches are compositionally biased toward gly residues: residues 88–146 and 153–166; these read GSGG…YGGG and EGGG…GGGW.

In terms of tissue distribution, predominantly expressed in meristematic and growing tissue.

It localises to the nucleus. Its function is as follows. May play a general role in circadian phenomena associated with meristematic tissue. In Sinapis alba (White mustard), this protein is Glycine-rich RNA-binding protein GRP1A.